A 240-amino-acid polypeptide reads, in one-letter code: Ubiquinone biosynthesis O-methyltransferase (240 aa).

S-adenosyl-L-methionine is bound by residues R44, G64, D85, and M129.

This sequence belongs to the methyltransferase superfamily. UbiG/COQ3 family.

It catalyses the reaction a 3-demethylubiquinol + S-adenosyl-L-methionine = a ubiquinol + S-adenosyl-L-homocysteine + H(+). The enzyme catalyses a 3-(all-trans-polyprenyl)benzene-1,2-diol + S-adenosyl-L-methionine = a 2-methoxy-6-(all-trans-polyprenyl)phenol + S-adenosyl-L-homocysteine + H(+). It functions in the pathway cofactor biosynthesis; ubiquinone biosynthesis. Functionally, O-methyltransferase that catalyzes the 2 O-methylation steps in the ubiquinone biosynthetic pathway. The polypeptide is Ubiquinone biosynthesis O-methyltransferase (Escherichia coli (strain SMS-3-5 / SECEC)).